A 149-amino-acid polypeptide reads, in one-letter code: UPF0208 membrane protein VSAL_I2111 (149 aa).

The next 2 membrane-spanning stretches (helical) occupy residues 41–61 (FAVK…MVFN) and 69–89 (SIII…WLGN).

It belongs to the UPF0208 family.

It is found in the cell inner membrane. The protein is UPF0208 membrane protein VSAL_I2111 of Aliivibrio salmonicida (strain LFI1238) (Vibrio salmonicida (strain LFI1238)).